The following is a 152-amino-acid chain: Large ribosomal subunit protein uL15 (152 aa).

It belongs to the universal ribosomal protein uL15 family. In terms of assembly, part of the 50S ribosomal subunit.

In terms of biological role, binds to the 23S rRNA. This Staphylothermus marinus (strain ATCC 43588 / DSM 3639 / JCM 9404 / F1) protein is Large ribosomal subunit protein uL15.